The chain runs to 126 residues: Succinate dehydrogenase hydrophobic membrane anchor subunit (126 aa).

At 1 to 24 the chain is on the cytoplasmic side; sequence MVYDFKAEIVKAKNSGSAKSGSHH. Residues 25 to 45 form a helical membrane-spanning segment; it reads WLLQRVTGIILALCSVWLIYF. Over 46-68 the chain is Periplasmic; it reads TLTNKNNDINIIMLWELKKPFNV. Residues 69-90 traverse the membrane as a helical segment; it reads VALLITVVISLYHAMLGMRVVI. H81 lines the heme pocket. At 91-100 the chain is on the cytoplasmic side; that stretch reads EDYISYHKLR. Y93 is an a ubiquinone binding site. The chain crosses the membrane as a helical span at residues 101-124; it reads NTLIIIVQLFCIVTIVAFVVALFY.

As to quaternary structure, part of an enzyme complex containing four subunits: a flavoprotein, an iron-sulfur protein, plus two membrane-anchoring proteins, SdhC and SdhD. Requires heme as cofactor.

It is found in the cell inner membrane. It functions in the pathway carbohydrate metabolism; tricarboxylic acid cycle. Its function is as follows. Membrane-anchoring subunit of succinate dehydrogenase (SDH). The sequence is that of Succinate dehydrogenase hydrophobic membrane anchor subunit (sdhD) from Rickettsia conorii (strain ATCC VR-613 / Malish 7).